A 181-amino-acid polypeptide reads, in one-letter code: ATP synthase subunit delta (181 aa).

This sequence belongs to the ATPase delta chain family. In terms of assembly, F-type ATPases have 2 components, F(1) - the catalytic core - and F(0) - the membrane proton channel. F(1) has five subunits: alpha(3), beta(3), gamma(1), delta(1), epsilon(1). F(0) has three main subunits: a(1), b(2) and c(10-14). The alpha and beta chains form an alternating ring which encloses part of the gamma chain. F(1) is attached to F(0) by a central stalk formed by the gamma and epsilon chains, while a peripheral stalk is formed by the delta and b chains.

Its subcellular location is the cell membrane. Its function is as follows. F(1)F(0) ATP synthase produces ATP from ADP in the presence of a proton or sodium gradient. F-type ATPases consist of two structural domains, F(1) containing the extramembraneous catalytic core and F(0) containing the membrane proton channel, linked together by a central stalk and a peripheral stalk. During catalysis, ATP synthesis in the catalytic domain of F(1) is coupled via a rotary mechanism of the central stalk subunits to proton translocation. In terms of biological role, this protein is part of the stalk that links CF(0) to CF(1). It either transmits conformational changes from CF(0) to CF(1) or is implicated in proton conduction. This Bacillus pumilus (strain SAFR-032) protein is ATP synthase subunit delta.